Here is a 532-residue protein sequence, read N- to C-terminus: Probable cyclic di-GMP phosphodiesterase PdeD (532 aa).

2 helical membrane passes run 16–36 (MIVC…VRFI) and 245–265 (LPLA…ATAY). The 250-residue stretch at 266-515 (RMSFSREINL…DFPKWLAGSQ (250 aa)) folds into the EAL domain.

The protein resides in the cell membrane. It catalyses the reaction 3',3'-c-di-GMP + H2O = 5'-phosphoguanylyl(3'-&gt;5')guanosine + H(+). Its function is as follows. Phosphodiesterase (PDE) that catalyzes the hydrolysis of cyclic-di-GMP (c-di-GMP) to 5'-pGpG. May serve as a negative regulator of cellulose synthesis (as has been suggested for S.typhimurium); overexpression inhibits cell aggregation in strains able to produce adhesive curli fimbriae. Cyclic-di-GMP is a second messenger which controls cell surface-associated traits in bacteria. This chain is Probable cyclic di-GMP phosphodiesterase PdeD, found in Escherichia coli (strain K12).